Reading from the N-terminus, the 247-residue chain is Oil body-associated protein 2A (247 aa).

Positions 1 to 26 are disordered; that stretch reads MASSDERPGAYPARDGSENLPPGDPK.

Belongs to the OBAP family.

The protein is Oil body-associated protein 2A of Arabidopsis thaliana (Mouse-ear cress).